A 151-amino-acid chain; its full sequence is Ubiquitin-like protein 4A-B (151 aa).

The Ubiquitin-like domain occupies 1-76; sequence MILTIKPLQG…LNLVVRPAGE (76 aa).

In terms of assembly, component of the BAT3 complex.

It is found in the cytoplasm. It localises to the cytosol. Its function is as follows. Component of the BAT3 complex, a multiprotein complex involved in the post-translational delivery of tail-anchored (TA) membrane proteins to the endoplasmic reticulum membrane. TA membrane proteins, also named type II transmembrane proteins, contain a single C-terminal transmembrane region. The protein is Ubiquitin-like protein 4A-B (ubl4ab) of Salmo salar (Atlantic salmon).